The chain runs to 348 residues: Phenylalanine--tRNA ligase alpha subunit (348 aa).

Glu259 contacts Mg(2+).

The protein belongs to the class-II aminoacyl-tRNA synthetase family. Phe-tRNA synthetase alpha subunit type 1 subfamily. Tetramer of two alpha and two beta subunits. Mg(2+) serves as cofactor.

The protein localises to the cytoplasm. It catalyses the reaction tRNA(Phe) + L-phenylalanine + ATP = L-phenylalanyl-tRNA(Phe) + AMP + diphosphate + H(+). This chain is Phenylalanine--tRNA ligase alpha subunit, found in Latilactobacillus sakei subsp. sakei (strain 23K) (Lactobacillus sakei subsp. sakei).